A 253-amino-acid chain; its full sequence is Methionine aminopeptidase A (253 aa).

His-80 is a substrate binding site. A divalent metal cation contacts are provided by Asp-98, Asp-109, and His-172. His-179 is a binding site for substrate. A divalent metal cation-binding residues include Glu-205 and Glu-236.

It belongs to the peptidase M24A family. Methionine aminopeptidase type 1 subfamily. Monomer. Co(2+) is required as a cofactor. Requires Zn(2+) as cofactor. The cofactor is Mn(2+). Fe(2+) serves as cofactor.

It catalyses the reaction Release of N-terminal amino acids, preferentially methionine, from peptides and arylamides.. Removes the N-terminal methionine from nascent proteins. The N-terminal methionine is often cleaved when the second residue in the primary sequence is small and uncharged (Met-Ala-, Cys, Gly, Pro, Ser, Thr, or Val). Requires deformylation of the N(alpha)-formylated initiator methionine before it can be hydrolyzed. The chain is Methionine aminopeptidase A from Synechocystis sp. (strain ATCC 27184 / PCC 6803 / Kazusa).